The primary structure comprises 94 residues: Integration host factor subunit beta (94 aa).

Belongs to the bacterial histone-like protein family. Heterodimer of an alpha and a beta chain.

Functionally, this protein is one of the two subunits of integration host factor, a specific DNA-binding protein that functions in genetic recombination as well as in transcriptional and translational control. The chain is Integration host factor subunit beta from Sodalis glossinidius (strain morsitans).